Here is a 361-residue protein sequence, read N- to C-terminus: Peptide chain release factor 1 (361 aa).

N5-methylglutamine is present on Gln-237. The disordered stretch occupies residues 283 to 307 (AQQQEQQEQQSSTRKELIGSGDRSQ).

It belongs to the prokaryotic/mitochondrial release factor family. Methylated by PrmC. Methylation increases the termination efficiency of RF1.

It is found in the cytoplasm. In terms of biological role, peptide chain release factor 1 directs the termination of translation in response to the peptide chain termination codons UAG and UAA. The chain is Peptide chain release factor 1 from Vesicomyosocius okutanii subsp. Calyptogena okutanii (strain HA).